The sequence spans 498 residues: 4-aminobutyrate aminotransferase (498 aa).

Position 164-165 (Gly164–Ser165) interacts with pyridoxal 5'-phosphate. A substrate-binding site is contributed by Arg222. Position 356 is an N6-(pyridoxal phosphate)lysine (Lys356). Pyridoxal 5'-phosphate is bound at residue Thr381.

The protein belongs to the class-III pyridoxal-phosphate-dependent aminotransferase family. In terms of assembly, homodimer. It depends on pyridoxal 5'-phosphate as a cofactor.

Its subcellular location is the cytoplasm. It carries out the reaction 4-aminobutanoate + 2-oxoglutarate = succinate semialdehyde + L-glutamate. Its function is as follows. Deaminates gamma-aminobutyric acid (GABA) to succinate-semialdehyde, which in turn is converted to succinate by the succinate semialdehyde dehydrogenase. Required for the degradation of GABA, which is important for utilization of GABA as nitrogen source. In Emericella nidulans (strain FGSC A4 / ATCC 38163 / CBS 112.46 / NRRL 194 / M139) (Aspergillus nidulans), this protein is 4-aminobutyrate aminotransferase (gatA).